We begin with the raw amino-acid sequence, 187 residues long: UPF0301 protein SG2023 (187 aa).

It belongs to the UPF0301 (AlgH) family.

This chain is UPF0301 protein SG2023, found in Sodalis glossinidius (strain morsitans).